Here is a 223-residue protein sequence, read N- to C-terminus: Uracil phosphoribosyltransferase (223 aa).

5-phospho-alpha-D-ribose 1-diphosphate contacts are provided by residues arginine 86, arginine 111, and 145–153 (DPILATGST). Uracil-binding positions include isoleucine 209 and 214–216 (GDA). Position 215 (aspartate 215) interacts with 5-phospho-alpha-D-ribose 1-diphosphate.

This sequence belongs to the UPRTase family. It depends on Mg(2+) as a cofactor.

The enzyme catalyses UMP + diphosphate = 5-phospho-alpha-D-ribose 1-diphosphate + uracil. It participates in pyrimidine metabolism; UMP biosynthesis via salvage pathway; UMP from uracil: step 1/1. Allosterically activated by GTP. In terms of biological role, catalyzes the conversion of uracil and 5-phospho-alpha-D-ribose 1-diphosphate (PRPP) to UMP and diphosphate. The polypeptide is Uracil phosphoribosyltransferase (Natronomonas pharaonis (strain ATCC 35678 / DSM 2160 / CIP 103997 / JCM 8858 / NBRC 14720 / NCIMB 2260 / Gabara) (Halobacterium pharaonis)).